The following is a 472-amino-acid chain: Eukaryotic translation initiation factor 2 subunit 3 (472 aa).

Positions 39–247 constitute a tr-type G domain; sequence QATINIGTIG…YIVNKIPVPV (209 aa). The tract at residues 48-55 is G1; the sequence is GHVAHGKS. Position 51-56 (51-56) interacts with GTP; sequence AHGKST. Residues 76 to 80 are G2; the sequence is NITIK. Positions 134–137 are G3; that stretch reads DCPG. GTP contacts are provided by residues 190–193 and 225–227; these read NKID and SAQ. The tract at residues 190–193 is G4; it reads NKID. Residues 225 to 227 are G5; sequence SAQ. The interval 457 to 469 is interacts with cdc123; that stretch reads GQIRRGVTITPTV.

This sequence belongs to the TRAFAC class translation factor GTPase superfamily. Classic translation factor GTPase family. EIF2G subfamily. Eukaryotic translation initiation factor 2 eIF2 is a heterotrimeric complex composed of an alpha (EIF2S1), a beta (EIF2S2) and a gamma (EIF2S3) chain. eIF2 is member of the 43S pre-initiation complex (43S PIC).

It localises to the cytoplasm. It is found in the cytosol. It carries out the reaction GTP + H2O = GDP + phosphate + H(+). Functionally, member of the eIF2 complex that functions in the early steps of protein synthesis by forming a ternary complex with GTP and initiator tRNA. This complex binds to a 40S ribosomal subunit, followed by mRNA binding to form the 43S pre-initiation complex (43S PIC). Junction of the 60S ribosomal subunit to form the 80S initiation complex is preceded by hydrolysis of the GTP bound to eIF2 and release of an eIF2-GDP binary complex. In order for eIF2 to recycle and catalyze another round of initiation, the GDP bound to eIF2 must exchange with GTP by way of a reaction catalyzed by eIF-2B. This Danio rerio (Zebrafish) protein is Eukaryotic translation initiation factor 2 subunit 3.